The chain runs to 301 residues: Probable alpha-L-glutamate ligase (301 aa).

The ATP-grasp domain maps to Leu-104 to Glu-287. Residues Lys-141, Glu-178–Tyr-179, Asp-187, and Arg-211–Asn-213 contribute to the ATP site. Mg(2+) contacts are provided by Asp-248, Glu-260, and Asn-262. Mn(2+) contacts are provided by Asp-248, Glu-260, and Asn-262.

This sequence belongs to the RimK family. It depends on Mg(2+) as a cofactor. Mn(2+) serves as cofactor.

This chain is Probable alpha-L-glutamate ligase, found in Pseudomonas fluorescens (strain ATCC BAA-477 / NRRL B-23932 / Pf-5).